We begin with the raw amino-acid sequence, 482 residues long: Aspartyl/glutamyl-tRNA(Asn/Gln) amidotransferase subunit B (482 aa).

This sequence belongs to the GatB/GatE family. GatB subfamily. As to quaternary structure, heterotrimer of A, B and C subunits.

It carries out the reaction L-glutamyl-tRNA(Gln) + L-glutamine + ATP + H2O = L-glutaminyl-tRNA(Gln) + L-glutamate + ADP + phosphate + H(+). The catalysed reaction is L-aspartyl-tRNA(Asn) + L-glutamine + ATP + H2O = L-asparaginyl-tRNA(Asn) + L-glutamate + ADP + phosphate + 2 H(+). Allows the formation of correctly charged Asn-tRNA(Asn) or Gln-tRNA(Gln) through the transamidation of misacylated Asp-tRNA(Asn) or Glu-tRNA(Gln) in organisms which lack either or both of asparaginyl-tRNA or glutaminyl-tRNA synthetases. The reaction takes place in the presence of glutamine and ATP through an activated phospho-Asp-tRNA(Asn) or phospho-Glu-tRNA(Gln). This chain is Aspartyl/glutamyl-tRNA(Asn/Gln) amidotransferase subunit B, found in Thermotoga sp. (strain RQ2).